Consider the following 37-residue polypeptide: Photosystem I reaction center subunit VIII (37 aa).

A helical membrane pass occupies residues 7-27 (LPSFFVPLVGLVFPAIAMASL).

Belongs to the PsaI family.

It is found in the plastid. The protein resides in the chloroplast thylakoid membrane. Functionally, may help in the organization of the PsaL subunit. In Eucalyptus globulus subsp. globulus (Tasmanian blue gum), this protein is Photosystem I reaction center subunit VIII.